The sequence spans 420 residues: Serine--tRNA ligase (420 aa).

229–231 (TAE) contacts L-serine. 260-262 (RAE) provides a ligand contact to ATP. Residue glutamate 283 participates in L-serine binding. An ATP-binding site is contributed by 347 to 350 (EISS). Serine 382 lines the L-serine pocket.

The protein belongs to the class-II aminoacyl-tRNA synthetase family. Type-1 seryl-tRNA synthetase subfamily. Homodimer. The tRNA molecule binds across the dimer.

The protein localises to the cytoplasm. It carries out the reaction tRNA(Ser) + L-serine + ATP = L-seryl-tRNA(Ser) + AMP + diphosphate + H(+). The enzyme catalyses tRNA(Sec) + L-serine + ATP = L-seryl-tRNA(Sec) + AMP + diphosphate + H(+). It participates in aminoacyl-tRNA biosynthesis; selenocysteinyl-tRNA(Sec) biosynthesis; L-seryl-tRNA(Sec) from L-serine and tRNA(Sec): step 1/1. Functionally, catalyzes the attachment of serine to tRNA(Ser). Is also able to aminoacylate tRNA(Sec) with serine, to form the misacylated tRNA L-seryl-tRNA(Sec), which will be further converted into selenocysteinyl-tRNA(Sec). This is Serine--tRNA ligase from Caldicellulosiruptor bescii (strain ATCC BAA-1888 / DSM 6725 / KCTC 15123 / Z-1320) (Anaerocellum thermophilum).